The sequence spans 176 residues: Tubulin polymerization-promoting protein family member 3 (176 aa).

Residue Ala-2 is modified to N-acetylalanine. Residues 132 to 152 (TGSHKERFDESGKGKGIAGRQ) form a disordered region. Over residues 134–144 (SHKERFDESGK) the composition is skewed to basic and acidic residues.

It belongs to the TPPP family.

The protein resides in the cytoplasm. Its subcellular location is the cytoskeleton. Its function is as follows. Regulator of microtubule dynamic that has microtubule bundling activity. Required for embryo implantation; possibly by regulating beta-catenin. Also required for decidualization via regulation of beta-catenin. This chain is Tubulin polymerization-promoting protein family member 3, found in Mus musculus (Mouse).